Consider the following 183-residue polypeptide: Large ribosomal subunit protein uL6 (183 aa).

It belongs to the universal ribosomal protein uL6 family. Part of the 50S ribosomal subunit.

Its function is as follows. This protein binds to the 23S rRNA, and is important in its secondary structure. It is located near the subunit interface in the base of the L7/L12 stalk, and near the tRNA binding site of the peptidyltransferase center. This chain is Large ribosomal subunit protein uL6, found in Chlamydia muridarum (strain MoPn / Nigg).